The chain runs to 1076 residues: MEPGSKSVSRSDWQPEPHQRPITPLEPGPEKTPIAQPESKTLQGSNTQQKPASNQRPLTQQETPAQHDAESQKEPRAQQKSASQEEFLAPQKPAPQQSPYIQRVLLTQQEAASQQGPGLGKESITQQEPALRQRHVAQPGPGPGEPPPAQQEAESTPAAQAKPGAKREPSAPTESTSQETPEQSDKQTTPVQGAKSKQGSLTELGFLTKLQELSIQRSALEWKALSEWVTDSESESDVGSSSDTDSPATMGGMVAQGVKLGFKGKSGYKVMSGYSGTSPHEKTSARNHRHYQDTASRLIHNMDLRTMTQSLVTLAEDNIAFFSSQGPGETAQRLSGVFAGVREQALGLEPALGRLLGVAHLFDLDPETPANGYRSLVHTARCCLAHLLHKSRYVASNRRSIFFRTSHNLAELEAYLAALTQLRALVYYAQRLLVTNRPGVLFFEGDEGLTADFLREYVTLHKGCFYGRCLGFQFTPAIRPFLQTISIGLVSFGEHYKRNETGLSVAASSLFTSGRFAIDPELRGAEFERITQNLDVHFWKAFWNITEMEVLSSLANMASATVRVSRLLSLPPEAFEMPLTADPTLTVTISPPLAHTGPGPVLVRLISYDLREGQDSEELSSLIKSNGQRSLELWPRPQQAPRSRSLIVHFHGGGFVAQTSRSHEPYLKSWAQELGAPIISIDYSLAPEAPFPRALEECFFAYCWAIKHCALLGSTGERICLAGDSAGGNLCFTVALRAAAYGVRVPDGIMAAYPATMLQPAASPSRLLSLMDPLLPLSVLSKCVSAYAGAKTEDHSNSDQKALGMMGLVRRDTALLLRDFRLGASSWLNSFLELSGRKSQKMSEPIAEPMRRSVSEAALAQPQGPLGTDSLKNLTLRDLSLRGNSETSSDTPEMSLSAETLSPSTPSDVNFLLPPEDAGEEAEAKNELSPMDRGLGVRAAFPEGFHPRRSSQGATQMPLYSSPIVKNPFMSPLLAPDSMLKSLPPVHIVACALDPMLDDSVMLARRLRNLGQPVTLRVVEDLPHGFLTLAALCRETRQAAELCVERIRLVLTPPAGAGPSGETGAAGVDGGCGGRH.

Composition is skewed to polar residues over residues 1–12 and 38–64; these read MEPGSKSVSRSD and ESKT…QETP. 2 disordered regions span residues 1 to 198 and 229 to 250; these read MEPG…KSKQ and VTDS…PATM. Over residues 65–77 the composition is skewed to basic and acidic residues; sequence AQHDAESQKEPRA. Over residues 94 to 116 the composition is skewed to polar residues; it reads APQQSPYIQRVLLTQQEAASQQG. Pro residues predominate over residues 140–149; sequence GPGPGEPPPA. The span at 150–161 shows a compositional bias: low complexity; the sequence is QQEAESTPAAQA. Residues 172–198 are compositionally biased toward polar residues; sequence PTESTSQETPEQSDKQTTPVQGAKSKQ. The span at 237 to 246 shows a compositional bias: low complexity; sequence DVGSSSDTDS. The short motif at 651–653 is the Involved in the stabilization of the negatively charged intermediate by the formation of the oxyanion hole element; that stretch reads HGG. Serine 725 is an active-site residue. Residues 838–930 are disordered; that stretch reads KSQKMSEPIA…EAEAKNELSP (93 aa). Residue serine 853 is modified to Phosphoserine. Serine 855 carries the phosphoserine; by AMPK modification. A compositionally biased stretch (polar residues) spans 882-908; it reads RGNSETSSDTPEMSLSAETLSPSTPSD. Residues serine 897, serine 929, serine 950, and serine 951 each carry the phosphoserine modification. Residues aspartate 994 and histidine 1024 contribute to the active site. The tract at residues 1055-1076 is disordered; it reads AGAGPSGETGAAGVDGGCGGRH. The segment covering 1067–1076 has biased composition (gly residues); it reads GVDGGCGGRH.

It belongs to the 'GDXG' lipolytic enzyme family. As to quaternary structure, monomer and homodimer. Interacts with CAVIN1 in the adipocyte cytoplasm. Interacts with PLIN5. Phosphorylation by AMPK reduces its translocation towards the lipid droplets. In terms of tissue distribution, testis.

It is found in the cell membrane. It localises to the membrane. The protein localises to the caveola. The protein resides in the cytoplasm. Its subcellular location is the cytosol. It is found in the lipid droplet. The enzyme catalyses a diacylglycerol + H2O = a monoacylglycerol + a fatty acid + H(+). It carries out the reaction a triacylglycerol + H2O = a diacylglycerol + a fatty acid + H(+). The catalysed reaction is a monoacylglycerol + H2O = glycerol + a fatty acid + H(+). It catalyses the reaction Hydrolyzes glycerol monoesters of long-chain fatty acids.. The enzyme catalyses 1,2-di-(9Z-octadecenoyl)-glycerol + (9Z)-octadecenoate + H(+) = 1,2,3-tri-(9Z-octadecenoyl)-glycerol + H2O. It carries out the reaction 2,3-di-(9Z)-octadecenoyl-sn-glycerol + H2O = 2-(9Z-octadecenoyl)-glycerol + (9Z)-octadecenoate + H(+). The catalysed reaction is cholesteryl (9Z-octadecenoate) + H2O = cholesterol + (9Z)-octadecenoate + H(+). It catalyses the reaction 1,2,3-tri-(9Z-octadecenoyl)-glycerol + H2O = di-(9Z)-octadecenoylglycerol + (9Z)-octadecenoate + H(+). The enzyme catalyses all-trans-retinyl hexadecanoate + H2O = all-trans-retinol + hexadecanoate + H(+). It carries out the reaction 1,2-di-(9Z-octadecenoyl)-glycerol + H2O = (9Z-octadecenoyl)-glycerol + (9Z)-octadecenoate + H(+). The catalysed reaction is 2-(5Z,8Z,11Z,14Z-eicosatetraenoyl)-glycerol + H2O = glycerol + (5Z,8Z,11Z,14Z)-eicosatetraenoate + H(+). It catalyses the reaction 1-(9Z-octadecenoyl)-glycerol + H2O = glycerol + (9Z)-octadecenoate + H(+). The enzyme catalyses 2-(9Z-octadecenoyl)-glycerol + H2O = glycerol + (9Z)-octadecenoate + H(+). It carries out the reaction 1-O-hexadecyl-2-acetyl-sn-glycerol + H2O = 1-O-hexadecyl-sn-glycerol + acetate + H(+). The catalysed reaction is 1,2-di-(9Z-octadecenoyl)-sn-glycerol + H2O = (9Z-octadecenoyl)-glycerol + (9Z)-octadecenoate + H(+). It catalyses the reaction 1,3-di-(9Z-octadecenoyl)-glycerol + H2O = 1-(9Z-octadecenoyl)-glycerol + (9Z)-octadecenoate + H(+). The enzyme catalyses 1,2-di-(9Z-octadecenoyl)-glycerol + H2O = 2-(9Z-octadecenoyl)-glycerol + (9Z)-octadecenoate + H(+). It functions in the pathway glycerolipid metabolism; triacylglycerol degradation. Retinyl ester hydrolase is inhibited by bis-p-nitrophenyl phosphate. Its function is as follows. Lipase with broad substrate specificity, catalyzing the hydrolysis of triacylglycerols (TAGs), diacylglycerols (DAGs), monoacylglycerols (MAGs), cholesteryl esters and retinyl esters. Shows a preferential hydrolysis of DAGs over TAGs and MAGs and preferentially hydrolyzes the fatty acid (FA) esters at the sn-3 position of the glycerol backbone in DAGs. Preferentially hydrolyzes FA esters at the sn-1 and sn-2 positions of the glycerol backbone in TAGs. Catalyzes the hydrolysis of 2-arachidonoylglycerol, an endocannabinoid and of 2-acetyl monoalkylglycerol ether, the penultimate precursor of the pathway for de novo synthesis of platelet-activating factor. In adipose tissue and heart, it primarily hydrolyzes stored triglycerides to free fatty acids, while in steroidogenic tissues, it principally converts cholesteryl esters to free cholesterol for steroid hormone production. This Homo sapiens (Human) protein is Hormone-sensitive lipase (LIPE).